A 333-amino-acid chain; its full sequence is Ketol-acid reductoisomerase (NADP(+)) (333 aa).

One can recognise a KARI N-terminal Rossmann domain in the interval 1 to 171 (MSNDTQPKIA…GGARANIIKT (171 aa)). NADP(+)-binding positions include 14 to 17 (YGSQ), R37, T42, and 72 to 75 (DMVQ). Residue H97 is part of the active site. G123 is an NADP(+) binding site. The KARI C-terminal knotted domain occupies 172 to 317 (TFKEETETDL…KKLRAKMVWL (146 aa)). Mg(2+)-binding residues include D180, E184, E216, and E220. Substrate is bound at residue S241.

It belongs to the ketol-acid reductoisomerase family. Requires Mg(2+) as cofactor.

The enzyme catalyses (2R)-2,3-dihydroxy-3-methylbutanoate + NADP(+) = (2S)-2-acetolactate + NADPH + H(+). It carries out the reaction (2R,3R)-2,3-dihydroxy-3-methylpentanoate + NADP(+) = (S)-2-ethyl-2-hydroxy-3-oxobutanoate + NADPH + H(+). It participates in amino-acid biosynthesis; L-isoleucine biosynthesis; L-isoleucine from 2-oxobutanoate: step 2/4. Its pathway is amino-acid biosynthesis; L-valine biosynthesis; L-valine from pyruvate: step 2/4. Functionally, involved in the biosynthesis of branched-chain amino acids (BCAA). Catalyzes an alkyl-migration followed by a ketol-acid reduction of (S)-2-acetolactate (S2AL) to yield (R)-2,3-dihydroxy-isovalerate. In the isomerase reaction, S2AL is rearranged via a Mg-dependent methyl migration to produce 3-hydroxy-3-methyl-2-ketobutyrate (HMKB). In the reductase reaction, this 2-ketoacid undergoes a metal-dependent reduction by NADPH to yield (R)-2,3-dihydroxy-isovalerate. The chain is Ketol-acid reductoisomerase (NADP(+)) from Xanthomonas oryzae pv. oryzae (strain MAFF 311018).